The chain runs to 132 residues: Agouti-signaling protein (132 aa).

An N-terminal signal peptide occupies residues Met1–Ser22. Asn39 carries an N-linked (GlcNAc...) asparagine glycan. The disordered stretch occupies residues Gln61 to Thr87. A compositionally biased stretch (basic and acidic residues) spans Ser63–Met79. Cystine bridges form between Cys93–Cys108, Cys100–Cys114, Cys107–Cys125, Cys111–Cys132, and Cys116–Cys123. The Agouti domain maps to Cys93–Cys132.

The protein localises to the secreted. Its function is as follows. Involved in the regulation of melanogenesis. The binding of ASP to MC1R precludes alpha-MSH initiated signaling and thus blocks production of cAMP, leading to a down-regulation of eumelanogenesis (brown/black pigment) and thus increasing synthesis of pheomelanin (yellow/red pigment). This is Agouti-signaling protein (ASIP) from Macaca nigra (Celebes black macaque).